Reading from the N-terminus, the 217-residue chain is Coiled-coil domain-containing protein 124 (217 aa).

Residues 1–120 (MPKKFQGENS…PVEKAKSHLE (120 aa)) form a disordered region. The stretch at 15-82 (ARARRAEAKA…LLEEEDSRLK (68 aa)) forms a coiled coil. Basic and acidic residues-rich tracts occupy residues 18–74 (RRAE…QRLL) and 98–120 (QIEDSLRREQRAEPVEKAKSHLE). Residues Ser-136 and Ser-188 each carry the phosphoserine modification.

It belongs to the CCDC124 family. As to quaternary structure, associates with translationally inactive ribosomes in the nonrotated state. Interacts with RASGEF1B.

The protein localises to the cytoplasm. It is found in the cytoskeleton. Its subcellular location is the microtubule organizing center. The protein resides in the centrosome. It localises to the midbody. Ribosome-binding protein involved in ribosome hibernation: associates with translationally inactive ribosomes and stabilizes the nonrotated conformation of the 80S ribosome, thereby promoting ribosome preservation and storage. Also required for proper progression of late cytokinetic stages. In Mus musculus (Mouse), this protein is Coiled-coil domain-containing protein 124 (Ccdc124).